Consider the following 73-residue polypeptide: Protein SlyX homolog (73 aa).

Belongs to the SlyX family.

The sequence is that of Protein SlyX homolog from Haemophilus ducreyi (strain 35000HP / ATCC 700724).